Here is a 154-residue protein sequence, read N- to C-terminus: Ribosome maturation factor RimP (154 aa).

It belongs to the RimP family.

The protein resides in the cytoplasm. In terms of biological role, required for maturation of 30S ribosomal subunits. This is Ribosome maturation factor RimP from Flavobacterium psychrophilum (strain ATCC 49511 / DSM 21280 / CIP 103535 / JIP02/86).